A 1113-amino-acid polypeptide reads, in one-letter code: uncharacterized protein (1113 aa).

An ATP-binding site is contributed by 313 to 320 (GPPGTGKS).

This sequence belongs to the DNA2/NAM7 helicase family.

This is an uncharacterized protein from Mycoplasma pneumoniae (strain ATCC 29342 / M129 / Subtype 1) (Mycoplasmoides pneumoniae).